Here is a 201-residue protein sequence, read N- to C-terminus: 3-isopropylmalate dehydratase small subunit (201 aa).

The protein belongs to the LeuD family. LeuD type 1 subfamily. In terms of assembly, heterodimer of LeuC and LeuD.

The catalysed reaction is (2R,3S)-3-isopropylmalate = (2S)-2-isopropylmalate. The protein operates within amino-acid biosynthesis; L-leucine biosynthesis; L-leucine from 3-methyl-2-oxobutanoate: step 2/4. In terms of biological role, catalyzes the isomerization between 2-isopropylmalate and 3-isopropylmalate, via the formation of 2-isopropylmaleate. In Shewanella halifaxensis (strain HAW-EB4), this protein is 3-isopropylmalate dehydratase small subunit.